A 346-amino-acid polypeptide reads, in one-letter code: [LysW]-lysine/[LysW]-ornithine hydrolase (346 aa).

His68 provides a ligand contact to Zn(2+). Asp70 is a catalytic residue. Asp92 lines the Zn(2+) pocket. The active-site Proton acceptor is Glu122. Positions 123, 146, and 317 each coordinate Zn(2+).

This sequence belongs to the peptidase M20A family. LysK subfamily. Requires Zn(2+) as cofactor. The cofactor is Co(2+).

Its subcellular location is the cytoplasm. The catalysed reaction is [amino-group carrier protein]-C-terminal-gamma-(L-lysyl)-L-glutamate + H2O = [amino-group carrier protein]-C-terminal-L-glutamate + L-lysine. The enzyme catalyses [amino-group carrier protein]-C-terminal-gamma-(L-ornithyl)-L-glutamate + H2O = [amino-group carrier protein]-C-terminal-L-glutamate + L-ornithine. Its pathway is amino-acid biosynthesis; L-lysine biosynthesis via AAA pathway; L-lysine from L-alpha-aminoadipate (Thermus route): step 5/5. It participates in amino-acid biosynthesis; L-arginine biosynthesis. In terms of biological role, catalyzes the release of L-lysine from [LysW]-gamma-L-lysine and the release of L-ornithine from [LysW]-L-ornithine. The polypeptide is [LysW]-lysine/[LysW]-ornithine hydrolase (Saccharolobus islandicus (strain Y.G.57.14 / Yellowstone #1) (Sulfolobus islandicus)).